Consider the following 278-residue polypeptide: UPF0758 protein BURPS1106A_0984 (278 aa).

The segment at 1-64 is disordered; it reads MQYEIVSAGE…ATAAARRGRD (64 aa). Positions 22–59 are enriched in low complexity; sequence AAAPAAPSSAVPSSAALSSAALSSAAQPTGAPPATAAA. The MPN domain maps to 156–278; the sequence is LVDSPGAVDD…TFSFAQAGWI (123 aa). Zn(2+)-binding residues include His-227, His-229, and Asp-240. Residues 227–240 carry the JAMM motif motif; sequence HNHPSGAVRPSAAD.

The protein belongs to the UPF0758 family.

In Burkholderia pseudomallei (strain 1106a), this protein is UPF0758 protein BURPS1106A_0984.